A 289-amino-acid chain; its full sequence is Shikimate dehydrogenase (NADP(+)) (289 aa).

Shikimate-binding positions include 20–22 and Ser-67; that span reads SIS. The active-site Proton acceptor is the Lys-71. Asp-83 serves as a coordination point for NADP(+). Shikimate-binding residues include Asn-92 and Asp-107. NADP(+)-binding positions include 132–136 and Val-230; that span reads GGGGA. Shikimate is bound at residue Tyr-232. Residue Gly-253 participates in NADP(+) binding.

Belongs to the shikimate dehydrogenase family. In terms of assembly, homodimer.

It carries out the reaction shikimate + NADP(+) = 3-dehydroshikimate + NADPH + H(+). It functions in the pathway metabolic intermediate biosynthesis; chorismate biosynthesis; chorismate from D-erythrose 4-phosphate and phosphoenolpyruvate: step 4/7. Involved in the biosynthesis of the chorismate, which leads to the biosynthesis of aromatic amino acids. Catalyzes the reversible NADPH linked reduction of 3-dehydroshikimate (DHSA) to yield shikimate (SA). The protein is Shikimate dehydrogenase (NADP(+)) of Streptococcus suis (strain 98HAH33).